Reading from the N-terminus, the 437-residue chain is Enolase (437 aa).

(2R)-2-phosphoglycerate is bound at residue Q162. Residue E204 is the Proton donor of the active site. Residues D251, E297, and D324 each coordinate Mg(2+). Positions 349, 378, 379, and 400 each coordinate (2R)-2-phosphoglycerate. The active-site Proton acceptor is the K349.

The protein belongs to the enolase family. Mg(2+) serves as cofactor.

It localises to the cytoplasm. The protein localises to the secreted. The protein resides in the cell surface. The catalysed reaction is (2R)-2-phosphoglycerate = phosphoenolpyruvate + H2O. It functions in the pathway carbohydrate degradation; glycolysis; pyruvate from D-glyceraldehyde 3-phosphate: step 4/5. In terms of biological role, catalyzes the reversible conversion of 2-phosphoglycerate (2-PG) into phosphoenolpyruvate (PEP). It is essential for the degradation of carbohydrates via glycolysis. The chain is Enolase from Pelodictyon phaeoclathratiforme (strain DSM 5477 / BU-1).